The primary structure comprises 771 residues: Solute carrier family 7 member 14 (771 aa).

The next 6 membrane-spanning stretches (helical) occupy residues 58–78 (LISL…SGLV), 83–103 (AGPG…LSGV), 119–141 (AYTY…NLIL), 187–207 (YPDL…ALGV), 216–236 (VLNV…LFFI), and 251–271 (WSGV…FDII). N282 is a glycosylation site (N-linked (GlcNAc...) asparagine). 5 helical membrane passes run 291 to 311 (ASLV…TLMV), 336 to 356 (FVVA…SLFP), 360 to 380 (VIYA…VSSY), 384 to 404 (PVVA…LVSL), and 407 to 427 (LIEM…VCVL). 3 positions are modified to phosphoserine: S465, S468, and S488. The next 4 membrane-spanning stretches (helical) occupy residues 565–585 (VTIC…FIIF), 596–616 (WAIL…FVIL), 628–648 (MAPC…YLML), and 655–675 (WIRF…YGIW). N-linked (GlcNAc...) asparagine glycosylation is present at N676. Positions 736–771 (DAKANGRTSSKAKSKSKHKQNSEALIANDELDYSPE) are disordered. Residues 745 to 754 (SKAKSKSKHK) show a composition bias toward basic residues. A phosphoserine mark is found at S757 and S769.

Belongs to the amino acid-polyamine-organocation (APC) superfamily. Cationic amino acid transporter (CAT) (TC 2.A.3.3) family. Expressed in skin fibroblasts.

The protein resides in the lysosome membrane. The catalysed reaction is 4-aminobutanoate(in) = 4-aminobutanoate(out). Imports 4-aminobutanoate (GABA) into lysosomes. May act as a GABA sensor that regulates mTORC2-dependent INS signaling and gluconeogenesis. The transport mechanism and substrate selectivity remain to be elucidated. The polypeptide is Solute carrier family 7 member 14 (Homo sapiens (Human)).